Reading from the N-terminus, the 195-residue chain is Glutamyl-tRNA(Gln) amidotransferase subunit C, mitochondrial (195 aa).

Residues 1–18 constitute a mitochondrion transit peptide; it reads MNLSTIGFQVIFKQRLRC.

This sequence belongs to the GatC family. In terms of assembly, subunit of the heterotrimeric GatCAB amidotransferase (AdT) complex, composed of A, B and C subunits.

It is found in the mitochondrion. The enzyme catalyses L-glutamyl-tRNA(Gln) + L-glutamine + ATP + H2O = L-glutaminyl-tRNA(Gln) + L-glutamate + ADP + phosphate + H(+). Functionally, allows the formation of correctly charged Gln-tRNA(Gln) through the transamidation of misacylated Glu-tRNA(Gln) in the mitochondria. The reaction takes place in the presence of glutamine and ATP through an activated gamma-phospho-Glu-tRNA(Gln). The protein is Glutamyl-tRNA(Gln) amidotransferase subunit C, mitochondrial of Brugia malayi (Filarial nematode worm).